Consider the following 236-residue polypeptide: Methylosome subunit pICln (236 aa).

At Ser-2 the chain carries N-acetylserine. The interval 88–109 (EESKEPPSDEDEEDNDDIEPIS) is disordered. Residues Ser-95, Ser-143, Ser-192, Ser-194, Ser-197, and Ser-209 each carry the phosphoserine modification. Residues 95–107 (SDEDEEDNDDIEP) are compositionally biased toward acidic residues. Residue Thr-222 is modified to Phosphothreonine.

It belongs to the pICln (TC 1.A.47) family. In terms of assembly, component of the methylosome, a 20S complex containing at least PRMT5/SKB1, WDR77/MEP50 and CLNS1A/pICln. May mediate SNRPD1 and SNRPD3 methylation. Forms a 6S pICln-Sm complex composed of CLNS1A/pICln, SNRPD1, SNRPD2, SNRPE, SNRPF and SNRPG; ring-like structure where CLNS1A/pICln mimics additional Sm proteins and which is unable to assemble into the core snRNP. Interacts with LSM10 and LSM11.

The protein resides in the cytoplasm. Its subcellular location is the cytosol. The protein localises to the nucleus. It is found in the cytoskeleton. Involved in both the assembly of spliceosomal snRNPs and the methylation of Sm proteins. Chaperone that regulates the assembly of spliceosomal U1, U2, U4 and U5 small nuclear ribonucleoproteins (snRNPs), the building blocks of the spliceosome, and thereby plays an important role in the splicing of cellular pre-mRNAs. Most spliceosomal snRNPs contain a common set of Sm proteins SNRPB, SNRPD1, SNRPD2, SNRPD3, SNRPE, SNRPF and SNRPG that assemble in a heptameric protein ring on the Sm site of the small nuclear RNA to form the core snRNP (Sm core). In the cytosol, the Sm proteins SNRPD1, SNRPD2, SNRPE, SNRPF and SNRPG are trapped in an inactive 6S pICln-Sm complex by the chaperone CLNS1A that controls the assembly of the core snRNP. Dissociation by the SMN complex of CLNS1A from the trapped Sm proteins and their transfer to an SMN-Sm complex triggers the assembly of core snRNPs and their transport to the nucleus. The chain is Methylosome subunit pICln (Clns1a) from Mus musculus (Mouse).